The primary structure comprises 850 residues: Ras GTPase-activating protein 2 (850 aa).

Residues 1–24 (MAAAAPAAAAASSEAPAASATAEP) are compositionally biased toward low complexity. Residues 1-32 (MAAAAPAAAAASSEAPAASATAEPEAGDQDSR) are disordered. Ala2 is subject to N-acetylalanine. C2 domains follow at residues 20 to 138 (ATAE…ETWF) and 149 to 289 (VQGK…QAWY). The Ras-GAP domain maps to 372 to 589 (DKLVPFATAV…IAVKKFLDEI (218 aa)). Ser555 carries the post-translational modification Phosphoserine. Positions 604–706 (VHLKEGEMYK…WIDVLCRVSR (103 aa)) constitute a PH domain. The Btk-type zinc finger occupies 708-744 (NQNRLSFYHPSVYLNGNWLCCQETGENTLGCKPCTAG). Zn(2+) contacts are provided by His716, Cys727, Cys728, and Cys738. The tract at residues 825-850 (HEKYRKKRSSSAKYGSKENPIVGKAS) is disordered.

The protein resides in the cytoplasm. Its subcellular location is the perinuclear region. In terms of biological role, inhibitory regulator of the Ras-cyclic AMP pathway. Binds inositol tetrakisphosphate (IP4). This is Ras GTPase-activating protein 2 (RASA2) from Homo sapiens (Human).